Consider the following 233-residue polypeptide: uncharacterized protein (233 aa).

The segment at 190–233 (LNTSLSEDDTESIVETDYSEEEKESISETESSSDDESYSLYDSF) is disordered. Positions 195–212 (SEDDTESIVETDYSEEEK) are enriched in acidic residues.

It belongs to the asfivirus DP238L family.

This is an uncharacterized protein from Ornithodoros (relapsing fever ticks).